A 391-amino-acid chain; its full sequence is Nuclear hormone receptor family member nhr-218 (391 aa).

The segment at residues 17 to 93 is a DNA-binding region (nuclear receptor); it reads PIPCQICTYQ…MGMKAEKIQQ (77 aa). NR C4-type zinc fingers lie at residues 20 to 40 and 56 to 76; these read CQICTYQSHGVNFNVMTCRAC and CKTRKNDCRIDSTERHFCRLC. The 246-residue stretch at 146–391 folds into the NR LBD domain; the sequence is SRNYSDSPLT…DNFCNLFAMK (246 aa).

This sequence belongs to the nuclear hormone receptor family.

It localises to the nucleus. In terms of biological role, orphan nuclear receptor. This is Nuclear hormone receptor family member nhr-218 (nhr-218) from Caenorhabditis elegans.